The following is a 515-amino-acid chain: MRTGKQYLESLNDGRVVWVGNEKIDNVATHPLTRDYAERVAQFYDLHHRPDLQDVLTFVDADGVRRSRQWQDPKDAAGLRVKRKYHETILREIAAGSYGRLPDAHNYTFTTYADDPEVWEKQSIGAEGRNLTQNIHNFLKLLREKDLNCPLNFVDPQTDRSSDAAQARSPNLRIVEKTDDGIIVNGVKAVGTGIAFGDYMHIGCLYRPGIPGEQVIFAAIPTNTPGVTVFCRESTVKNDPAEHPLASQGDELDSTTVFDNVFIPWEQVFHIGNPEHAKLYPQRIFDWVHYHILIRQVLRAELIVGLAILITEHIGTSKLPTVSARVAKLVAFHLAMQAHLIASEETGFHTKGGRYKPNPLIYDFGRAHFLQNQMSVMYELLDLAGRSSLMIPSEGQWDDSQSGQWFVKLNNGPKGNPRERVQIGRVIRDLYLTDWGGRQFMFENFNGTPLFAVFAATMTRDDMSAAGTYGKFASQVCGIEFGGAEPTAYAATADYAKALDKGLAPEPAAAESATS.

Residue 100 to 104 (RLPDA) participates in substrate binding. Residues 151 to 153 (LNF), 157 to 160 (QTDR), and T192 contribute to the FAD site. A substrate-binding site is contributed by 203-204 (GC). 457 to 460 (TMTR) is an FAD binding site.

It belongs to the FADH(2)-utilizing monooxygenase family. Homotetramer. The chlorophenol-4-monooxygenase is composed of an oxygenase component TftD and a reductase component TftC.

Its pathway is xenobiotic degradation. Its function is as follows. Oxygenase component of a two-component system that degrades 2,4,5-trichlorophenol. Uses FADH(2) supplied by TftC to oxidize 2,4,5-trichlorophenol (2,4,5-TCP) to 2,5-dichloro-p-benzoquinone, which is chemically reduced to 2,5-dichloro-p-hydroquinone (2,5-DiCHQ). Then, TftD oxidizes the latter to 5-chloro-2-hydroxy-p-benzoquinone. This Burkholderia cepacia (Pseudomonas cepacia) protein is FADH(2)-dependent monooxygenase TftD (tftD).